A 364-amino-acid chain; its full sequence is Histidinol-phosphate aminotransferase (364 aa).

Lys-226 is modified (N6-(pyridoxal phosphate)lysine).

The protein belongs to the class-II pyridoxal-phosphate-dependent aminotransferase family. Histidinol-phosphate aminotransferase subfamily. As to quaternary structure, homodimer. Pyridoxal 5'-phosphate is required as a cofactor.

The catalysed reaction is L-histidinol phosphate + 2-oxoglutarate = 3-(imidazol-4-yl)-2-oxopropyl phosphate + L-glutamate. It functions in the pathway amino-acid biosynthesis; L-histidine biosynthesis; L-histidine from 5-phospho-alpha-D-ribose 1-diphosphate: step 7/9. The chain is Histidinol-phosphate aminotransferase from Campylobacter jejuni (strain RM1221).